Reading from the N-terminus, the 143-residue chain is Putative pre-16S rRNA nuclease (143 aa).

It belongs to the YqgF nuclease family.

Its subcellular location is the cytoplasm. Could be a nuclease involved in processing of the 5'-end of pre-16S rRNA. The chain is Putative pre-16S rRNA nuclease from Crocosphaera subtropica (strain ATCC 51142 / BH68) (Cyanothece sp. (strain ATCC 51142)).